Here is a 520-residue protein sequence, read N- to C-terminus: Probable E3 ubiquitin-protein ligase XBOS33 (520 aa).

5 ANK repeats span residues 44–73, 77–106, 111–140, 185–214, and 228–258; these read GLNS…DVNV, CGQT…NVTR, SGRT…PSAP, GGVT…NVSA, and AGST…KLTL. Residues 327-377 form an RING-type zinc finger; sequence CAVCLERSCSVAAEGCCHEFCIKCALYLCSTSNTRVEFTGPPGSIPCPLCR. The span at 467–479 shows a compositional bias: polar residues; sequence QDGSEVQSPQPSH. The tract at residues 467 to 493 is disordered; the sequence is QDGSEVQSPQPSHCASMEMDKREQQDL. A compositionally biased stretch (basic and acidic residues) spans 484–493; that stretch reads EMDKREQQDL.

It carries out the reaction S-ubiquitinyl-[E2 ubiquitin-conjugating enzyme]-L-cysteine + [acceptor protein]-L-lysine = [E2 ubiquitin-conjugating enzyme]-L-cysteine + N(6)-ubiquitinyl-[acceptor protein]-L-lysine.. Its pathway is protein modification; protein ubiquitination. The sequence is that of Probable E3 ubiquitin-protein ligase XBOS33 (XBOS33) from Oryza sativa subsp. japonica (Rice).